A 632-amino-acid polypeptide reads, in one-letter code: Threonine--tRNA ligase (632 aa).

The TGS domain maps to 1 to 59 (MIRITFLAKQKVEEYSSRVTGFDILQPDISKEAIALRVNGELYDLSREIESDTEIDVIQ). Residues 240-532 (DHRRIAKDMD…LIEHYAGKFP (293 aa)) form a catalytic region. 3 residues coordinate Zn(2+): C332, H383, and H509.

The protein belongs to the class-II aminoacyl-tRNA synthetase family. As to quaternary structure, homodimer. The cofactor is Zn(2+).

The protein localises to the cytoplasm. It carries out the reaction tRNA(Thr) + L-threonine + ATP = L-threonyl-tRNA(Thr) + AMP + diphosphate + H(+). Its function is as follows. Catalyzes the attachment of threonine to tRNA(Thr) in a two-step reaction: L-threonine is first activated by ATP to form Thr-AMP and then transferred to the acceptor end of tRNA(Thr). Also edits incorrectly charged L-seryl-tRNA(Thr). This is Threonine--tRNA ligase from Wolbachia sp. subsp. Brugia malayi (strain TRS).